The following is a 349-amino-acid chain: Nicotinate-nucleotide--dimethylbenzimidazole phosphoribosyltransferase (349 aa).

Glu-315 serves as the catalytic Proton acceptor.

The protein belongs to the CobT family.

The catalysed reaction is 5,6-dimethylbenzimidazole + nicotinate beta-D-ribonucleotide = alpha-ribazole 5'-phosphate + nicotinate + H(+). Its pathway is nucleoside biosynthesis; alpha-ribazole biosynthesis; alpha-ribazole from 5,6-dimethylbenzimidazole: step 1/2. Catalyzes the synthesis of alpha-ribazole-5'-phosphate from nicotinate mononucleotide (NAMN) and 5,6-dimethylbenzimidazole (DMB). The sequence is that of Nicotinate-nucleotide--dimethylbenzimidazole phosphoribosyltransferase from Variovorax paradoxus (strain S110).